We begin with the raw amino-acid sequence, 221 residues long: Glutathione S-transferase A3 (221 aa).

Residue Ala-2 is modified to N-acetylalanine. The 81-residue stretch at 3-83 folds into the GST N-terminal domain; the sequence is GKPVLHYFDG…YIASKYNLYG (81 aa). Lys-4 carries the N6-succinyllysine modification. Residues Tyr-9, Arg-45, 54 to 55, and 67 to 68 contribute to the glutathione site; these read QV and QT. Positions 85-207 constitute a GST C-terminal domain; that stretch reads DMKERAIIDM…LQPGSQRKPF (123 aa).

In terms of assembly, homodimer.

Its subcellular location is the cytoplasm. The catalysed reaction is RX + glutathione = an S-substituted glutathione + a halide anion + H(+). It carries out the reaction androst-5-ene-3,17-dione = androst-4-ene-3,17-dione. The enzyme catalyses pregn-5-ene-3,20-dione = progesterone. Functionally, conjugation of reduced glutathione to a wide number of exogenous and endogenous hydrophobic electrophiles. Catalyzes isomerization reactions that contribute to the biosynthesis of steroid hormones. Efficiently catalyze obligatory double-bond isomerizations of delta(5)-androstene-3,17-dione and delta(5)-pregnene-3,20-dione, precursors to testosterone and progesterone, respectively. Has a high catalytic activity for aflatoxin B1-8,9 epoxide. This Mus musculus (Mouse) protein is Glutathione S-transferase A3.